An 86-amino-acid chain; its full sequence is Small ribosomal subunit protein bS16 (86 aa).

The protein belongs to the bacterial ribosomal protein bS16 family.

The polypeptide is Small ribosomal subunit protein bS16 (Legionella pneumophila (strain Paris)).